The primary structure comprises 61 residues: UPF0370 protein SG1720 (61 aa).

The helical transmembrane segment at 3–23 (WLADYWWVVLLVLAGMLIGGV) threads the bilayer. Over residues 37-47 (NRPELPPHRDN) the composition is skewed to basic and acidic residues. The tract at residues 37–61 (NRPELPPHRDNNAQWDEEDDWPKKP) is disordered. The span at 51 to 61 (WDEEDDWPKKP) shows a compositional bias: acidic residues.

It belongs to the UPF0370 family.

It is found in the cell membrane. This Sodalis glossinidius (strain morsitans) protein is UPF0370 protein SG1720.